Reading from the N-terminus, the 417-residue chain is Gamma-glutamyl phosphate reductase (417 aa).

It belongs to the gamma-glutamyl phosphate reductase family.

It is found in the cytoplasm. It catalyses the reaction L-glutamate 5-semialdehyde + phosphate + NADP(+) = L-glutamyl 5-phosphate + NADPH + H(+). It functions in the pathway amino-acid biosynthesis; L-proline biosynthesis; L-glutamate 5-semialdehyde from L-glutamate: step 2/2. In terms of biological role, catalyzes the NADPH-dependent reduction of L-glutamate 5-phosphate into L-glutamate 5-semialdehyde and phosphate. The product spontaneously undergoes cyclization to form 1-pyrroline-5-carboxylate. This chain is Gamma-glutamyl phosphate reductase, found in Enterobacter sp. (strain 638).